Consider the following 732-residue polypeptide: Elongation factor 2 (732 aa).

One can recognise a tr-type G domain in the interval 19-228 (ELVRNIGIVA…TKITFKDIVE (210 aa)). GTP contacts are provided by residues 28–35 (AHIDHGKT), 94–98 (DTPGH), and 148–151 (NKID). Residue histidine 598 is modified to Diphthamide.

The protein belongs to the TRAFAC class translation factor GTPase superfamily. Classic translation factor GTPase family. EF-G/EF-2 subfamily.

The protein resides in the cytoplasm. Functionally, catalyzes the GTP-dependent ribosomal translocation step during translation elongation. During this step, the ribosome changes from the pre-translocational (PRE) to the post-translocational (POST) state as the newly formed A-site-bound peptidyl-tRNA and P-site-bound deacylated tRNA move to the P and E sites, respectively. Catalyzes the coordinated movement of the two tRNA molecules, the mRNA and conformational changes in the ribosome. This chain is Elongation factor 2, found in Thermoplasma volcanium (strain ATCC 51530 / DSM 4299 / JCM 9571 / NBRC 15438 / GSS1).